Reading from the N-terminus, the 373-residue chain is C-C chemokine receptor type 2 (373 aa).

Residues 1 to 60 (MEDSNMLPQFIHGILSTSHSLFPRSIQELDEGATTPYDYDDGEPCHKTSVKQIGAWILPP) are Extracellular-facing. A helical membrane pass occupies residues 61-81 (LYSLVFIFGFVGNMLVIIILI). The Cytoplasmic portion of the chain corresponds to 82-91 (SCKKLKSMTD). The helical transmembrane segment at 92–112 (IYLFNLAISDLLFLLTLPFWA) threads the bilayer. Topologically, residues 113–128 (HYAANEWVFGNIMCKL) are extracellular. A disulfide bond links cysteine 126 and cysteine 203. Residues 129–149 (FTGLYHIGYFGGIFFIILLTI) form a helical membrane-spanning segment. The Cytoplasmic portion of the chain corresponds to 150 to 170 (DRYLAIVHAVFALKARTVTFG). Tyrosine 152 is modified (phosphotyrosine; by JAK2). The helical transmembrane segment at 171–191 (VITSVVTWVVAVFASLPGIIF) threads the bilayer. Residues 192–220 (TKSEQEDDQHTCGPYFPTIWKNFQTIMRN) are Extracellular-facing. The chain crosses the membrane as a helical span at residues 221-241 (ILSLILPLLVMVICYSGILHT). The Cytoplasmic segment spans residues 242–256 (LFRCRNEKKRHRAVR). The chain crosses the membrane as a helical span at residues 257 to 277 (LIFAIMIVYFLFWTPYNIVLF). The Extracellular portion of the chain corresponds to 278–301 (LTTFQEFLGMSNCVVDMHLDQAMQ). A helical transmembrane segment spans residues 302–322 (VTETLGMTHCCVNPIIYAFVG). At 323–373 (EKFRRYLSIFFRKHIAKNLCKQCPVFYRETADRVSSTFTPSTGEQEVSVGL) the chain is on the cytoplasmic side.

The protein belongs to the G-protein coupled receptor 1 family. As to quaternary structure, interacts with ARRB1. Interacts (via extracellular N-terminal region) with beta-defensin DEFB106A/DEFB106B; this interaction may preferentially require specific tyrosine sulfation on CCR2. Interacts with NUP85; the interaction is required for CCR2 clusters formation on the cell membrane and CCR2 signaling. N-glycosylated. Post-translationally, sulfation increases the affinity for both monomeric and dimeric CCL2 with stronger binding to the monomeric form. Binding of sulfated CCR2 to CCL2 promotes conversion of CCL2 from dimer to monomer. As to expression, expressed in lung, spleen, kidney, thymus and macrophages.

The protein resides in the cell membrane. In terms of biological role, key functional receptor for CCL2 but can also bind CCL7 and CCL12. Its binding with CCL2 on monocytes and macrophages mediates chemotaxis and migration induction through the activation of the PI3K cascade, the small G protein Rac and lamellipodium protrusion. Also acts as a receptor for the beta-defensin DEFB106A/DEFB106B. Regulates the expression of T-cell inflammatory cytokines and T-cell differentiation, promoting the differentiation of T-cells into T-helper 17 cells (Th17) during inflammation. Facilitates the export of mature thymocytes by enhancing directional movement of thymocytes to sphingosine-1-phosphate stimulation and up-regulation of S1P1R expression; signals through the JAK-STAT pathway to regulate FOXO1 activity leading to an increased expression of S1P1R. Plays an important role in mediating peripheral nerve injury-induced neuropathic pain. Increases NMDA-mediated synaptic transmission in both dopamine D1 and D2 receptor-containing neurons, which may be caused by MAPK/ERK-dependent phosphorylation of GRIN2B/NMDAR2B. Mediates the recruitment of macrophages and monocytes to the injury site following brain injury. This Rattus norvegicus (Rat) protein is C-C chemokine receptor type 2 (Ccr2).